The following is a 130-amino-acid chain: uncharacterized protein (130 aa).

The signal sequence occupies residues methionine 1–alanine 18.

This is an uncharacterized protein from Arabidopsis thaliana (Mouse-ear cress).